The following is a 198-amino-acid chain: Recombination protein RecR (198 aa).

A C4-type zinc finger spans residues 57-72 (CSICGNLTDDDPCHIC). A Toprim domain is found at 80-175 (TTILVVEDAK…KVTRLARGLA (96 aa)).

This sequence belongs to the RecR family.

May play a role in DNA repair. It seems to be involved in an RecBC-independent recombinational process of DNA repair. It may act with RecF and RecO. The sequence is that of Recombination protein RecR from Streptococcus pyogenes serotype M5 (strain Manfredo).